We begin with the raw amino-acid sequence, 287 residues long: Putative inactive carboxylesterase 4 (287 aa).

Residues 1-18 (MWLPALVLATLAASAAWA) form the signal peptide. N-linked (GlcNAc...) asparagine glycosylation occurs at Asn-80.

Belongs to the type-B carboxylesterase/lipase family. Expressed in placenta.

The protein resides in the secreted. In terms of biological role, has no esterase activity. In Homo sapiens (Human), this protein is Putative inactive carboxylesterase 4 (CES1P1).